Here is a 154-residue protein sequence, read N- to C-terminus: Ribonuclease H (154 aa).

Residues 1-142 (MEKTVEIYTD…VDDLARDAAG (142 aa)) enclose the RNase H type-1 domain. Residues Asp-10, Glu-48, Asp-70, and Asp-134 each coordinate Mg(2+).

This sequence belongs to the RNase H family. In terms of assembly, monomer. It depends on Mg(2+) as a cofactor.

It localises to the cytoplasm. The catalysed reaction is Endonucleolytic cleavage to 5'-phosphomonoester.. Its function is as follows. Endonuclease that specifically degrades the RNA of RNA-DNA hybrids. In Pseudoalteromonas translucida (strain TAC 125), this protein is Ribonuclease H.